The primary structure comprises 493 residues: tRNA(Ile)-lysidine synthase (493 aa).

ATP is bound at residue 26-31 (SGGSDS).

This sequence belongs to the tRNA(Ile)-lysidine synthase family.

It localises to the cytoplasm. The enzyme catalyses cytidine(34) in tRNA(Ile2) + L-lysine + ATP = lysidine(34) in tRNA(Ile2) + AMP + diphosphate + H(+). Ligates lysine onto the cytidine present at position 34 of the AUA codon-specific tRNA(Ile) that contains the anticodon CAU, in an ATP-dependent manner. Cytidine is converted to lysidine, thus changing the amino acid specificity of the tRNA from methionine to isoleucine. This is tRNA(Ile)-lysidine synthase from Bartonella henselae (strain ATCC 49882 / DSM 28221 / CCUG 30454 / Houston 1) (Rochalimaea henselae).